Reading from the N-terminus, the 811-residue chain is G-type lectin S-receptor-like serine/threonine-protein kinase LECRK2 (811 aa).

The first 23 residues, 1 to 23 (MAPLLFLPILQLLLLYCTKSAQA), serve as a signal peptide directing secretion. The Bulb-type lectin domain maps to 24-153 (QLNISIGSSL…DGATKWESFG (130 aa)). Over 24–464 (QLNISIGSSL…DKKYWILGSS (441 aa)) the chain is Extracellular. Residues N26, N39, N59, N219, N226, N237, and N242 are each glycosylated (N-linked (GlcNAc...) asparagine). In terms of domain architecture, EGF-like; atypical spans 292–344 (PENICQTIQTKVGSGACGFNSYCTFDGTKNTTNCLCPQRYKFFDNERTYKGCR). 5 disulfide bridges follow: C296/C314, C308/C325, C327/C343, C389/C411, and C393/C399. A glycan (N-linked (GlcNAc...) asparagine) is linked at N321. The 85-residue stretch at 352–436 (CDLDETAAMV…LQATVLLKVP (85 aa)) folds into the PAN domain. Residues 465 to 485 (LFFGSSVLVNFLLIFVLLFGT) form a helical membrane-spanning segment. Topologically, residues 486–811 (YCSITSRKKT…DPSSYISSLA (326 aa)) are cytoplasmic. One can recognise a Protein kinase domain in the interval 521 to 795 (GGFHEVLGTG…KVMQMLDGAV (275 aa)). Residues 527–535 (LGTGASGIV) and K551 each bind ATP. The active-site Proton acceptor is the D645.

It belongs to the protein kinase superfamily. Ser/Thr protein kinase family.

The protein localises to the membrane. The catalysed reaction is L-seryl-[protein] + ATP = O-phospho-L-seryl-[protein] + ADP + H(+). The enzyme catalyses L-threonyl-[protein] + ATP = O-phospho-L-threonyl-[protein] + ADP + H(+). Involved in resistance against the herbivorous insect brown planthopper (N.lugens, BPH). Member of the BPH3 (BPH resistance locus 3) cluster which contains LECRK1, LECRK2 and LECRK3. The polypeptide is G-type lectin S-receptor-like serine/threonine-protein kinase LECRK2 (Oryza sativa subsp. japonica (Rice)).